Here is a 67-residue protein sequence, read N- to C-terminus: Putative selenoprotein YdfZ (67 aa).

The residue at position 52 (Cys-52) is an S-selanylcysteine.

The sequence is that of Putative selenoprotein YdfZ (ydfZ) from Escherichia coli O6:H1 (strain CFT073 / ATCC 700928 / UPEC).